The following is a 667-amino-acid chain: Autophagy-related protein 20 (667 aa).

The segment at 1 to 94 (MKQKKNRFGS…DESFKSTRAN (94 aa)) is disordered. Positions 38–47 (SSSSRSSSTQ) are enriched in low complexity. Over residues 55-67 (SLASVHTSDMHQS) the composition is skewed to polar residues. Over residues 76 to 85 (DDNPFLDQDD) the composition is skewed to acidic residues. The PX domain maps to 185 to 331 (KLINDRVQIL…DFLDPNNINW (147 aa)). The a 1,2-diacyl-sn-glycero-3-phospho-(1D-myo-inositol-3-phosphate) site is built by R222, S224, K248, and R297. The disordered stretch occupies residues 524–562 (ELQRGVQPRNGNTASGASGNDESSVKKPQASKSQSSSYG). Positions 532-545 (RNGNTASGASGNDE) are enriched in polar residues. The segment covering 549-560 (KKPQASKSQSSS) has biased composition (low complexity). A coiled-coil region spans residues 588–652 (QTTMANLIKE…SKYLKDYAKK (65 aa)).

This sequence belongs to the sorting nexin family.

The protein localises to the endosome membrane. The protein resides in the preautophagosomal structure membrane. In terms of biological role, required for cytoplasm to vacuole transport (Cvt), pexophagy and mitophagy. Also involved in endoplasmic reticulum-specific autophagic process and is essential for the survival of cells subjected to severe ER stress. Functions in protein retrieval from the endocytic pathway. This Vanderwaltozyma polyspora (strain ATCC 22028 / DSM 70294 / BCRC 21397 / CBS 2163 / NBRC 10782 / NRRL Y-8283 / UCD 57-17) (Kluyveromyces polysporus) protein is Autophagy-related protein 20 (ATG20).